The sequence spans 456 residues: UDP-N-acetylglucosamine 1-carboxyvinyltransferase (456 aa).

34–35 (KN) is a binding site for phosphoenolpyruvate. Position 104 (R104) interacts with UDP-N-acetyl-alpha-D-glucosamine. C128 acts as the Proton donor in catalysis. A 2-(S-cysteinyl)pyruvic acid O-phosphothioketal modification is found at C128. UDP-N-acetyl-alpha-D-glucosamine is bound by residues D319 and I341.

This sequence belongs to the EPSP synthase family. MurA subfamily.

The protein localises to the cytoplasm. It carries out the reaction phosphoenolpyruvate + UDP-N-acetyl-alpha-D-glucosamine = UDP-N-acetyl-3-O-(1-carboxyvinyl)-alpha-D-glucosamine + phosphate. Its pathway is cell wall biogenesis; peptidoglycan biosynthesis. Cell wall formation. Adds enolpyruvyl to UDP-N-acetylglucosamine. The sequence is that of UDP-N-acetylglucosamine 1-carboxyvinyltransferase from Prochlorococcus marinus (strain AS9601).